A 157-amino-acid chain; its full sequence is Endoribonuclease YbeY (157 aa).

His121, His125, and His131 together coordinate Zn(2+).

The protein belongs to the endoribonuclease YbeY family. Zn(2+) serves as cofactor.

Its subcellular location is the cytoplasm. In terms of biological role, single strand-specific metallo-endoribonuclease involved in late-stage 70S ribosome quality control and in maturation of the 3' terminus of the 16S rRNA. In Salinispora tropica (strain ATCC BAA-916 / DSM 44818 / JCM 13857 / NBRC 105044 / CNB-440), this protein is Endoribonuclease YbeY.